We begin with the raw amino-acid sequence, 207 residues long: Urease accessory protein UreG (207 aa).

16–23 is a binding site for GTP; the sequence is GPVGSGKT.

The protein belongs to the SIMIBI class G3E GTPase family. UreG subfamily. As to quaternary structure, homodimer. UreD, UreF and UreG form a complex that acts as a GTP-hydrolysis-dependent molecular chaperone, activating the urease apoprotein by helping to assemble the nickel containing metallocenter of UreC. The UreE protein probably delivers the nickel.

Its subcellular location is the cytoplasm. Its function is as follows. Facilitates the functional incorporation of the urease nickel metallocenter. This process requires GTP hydrolysis, probably effectuated by UreG. The protein is Urease accessory protein UreG of Blochmanniella pennsylvanica (strain BPEN).